We begin with the raw amino-acid sequence, 448 residues long: MANVVENLGKLERRVTISLPKDTVQKEIDARIQKLAKNVRMPGFRPGKVPLKMVAQQYSGQVEAEVLSDKIGQEFFTISRAENLRVAGQPSFEPKQEQAEDAYAFDATFEVYPEVKIGDLATAEVERSTTSIGDAEIDRTLDILRKQRVHYHARGEAGEHGDGGADTAAKDGDRVTVDFVGKIDDVAFQGGTAEDFPFVLGEGRMLPEFETAALGLKVGEQRTFDLKFPDDYHGKDVAGKTAQFTVTMKKIEWPHLPEIDAEFAKSLGIEDGDLTKMRAEIKENLEREAKRRTQSIVKNQVMDALLKISELDVPKALIEQDQQRLVEMARQDLAQRGVPNAKDAPIPAEMFAEQAERRVKLGLVLAELVKANGLEAKPEQIRAEVDEFAKSYEDPKEVVRWYYSNQQRLAEMEAFVVESNVVDFVLGKAKVTDKEVSFEALASASSQA.

The region spanning 172–257 (GDRVTVDFVG…MKKIEWPHLP (86 aa)) is the PPIase FKBP-type domain.

The protein belongs to the FKBP-type PPIase family. Tig subfamily.

Its subcellular location is the cytoplasm. The catalysed reaction is [protein]-peptidylproline (omega=180) = [protein]-peptidylproline (omega=0). Functionally, involved in protein export. Acts as a chaperone by maintaining the newly synthesized protein in an open conformation. Functions as a peptidyl-prolyl cis-trans isomerase. The protein is Trigger factor of Burkholderia ambifaria (strain ATCC BAA-244 / DSM 16087 / CCUG 44356 / LMG 19182 / AMMD) (Burkholderia cepacia (strain AMMD)).